Consider the following 174-residue polypeptide: Protein GrpE (174 aa).

This sequence belongs to the GrpE family. In terms of assembly, homodimer.

It is found in the cytoplasm. In terms of biological role, participates actively in the response to hyperosmotic and heat shock by preventing the aggregation of stress-denatured proteins, in association with DnaK and GrpE. It is the nucleotide exchange factor for DnaK and may function as a thermosensor. Unfolded proteins bind initially to DnaJ; upon interaction with the DnaJ-bound protein, DnaK hydrolyzes its bound ATP, resulting in the formation of a stable complex. GrpE releases ADP from DnaK; ATP binding to DnaK triggers the release of the substrate protein, thus completing the reaction cycle. Several rounds of ATP-dependent interactions between DnaJ, DnaK and GrpE are required for fully efficient folding. The sequence is that of Protein GrpE from Methanothermobacter thermautotrophicus (strain ATCC 29096 / DSM 1053 / JCM 10044 / NBRC 100330 / Delta H) (Methanobacterium thermoautotrophicum).